Consider the following 106-residue polypeptide: UPF0060 membrane protein CHU_3331 (106 aa).

Transmembrane regions (helical) follow at residues 5–25 (FYFI…WLHF), 31–51 (ALLL…LTKI), 59–79 (AYAV…YGIE), and 85–105 (IWDY…LFAP).

Belongs to the UPF0060 family.

The protein resides in the cell inner membrane. This chain is UPF0060 membrane protein CHU_3331, found in Cytophaga hutchinsonii (strain ATCC 33406 / DSM 1761 / CIP 103989 / NBRC 15051 / NCIMB 9469 / D465).